A 73-amino-acid polypeptide reads, in one-letter code: Translational regulator CsrA (73 aa).

It belongs to the CsrA/RsmA family. Homodimer; the beta-strands of each monomer intercalate to form a hydrophobic core, while the alpha-helices form wings that extend away from the core.

It localises to the cytoplasm. Its function is as follows. A translational regulator that binds mRNA to regulate translation initiation and/or mRNA stability. Usually binds in the 5'-UTR at or near the Shine-Dalgarno sequence preventing ribosome-binding, thus repressing translation. Its main target seems to be the major flagellin gene, while its function is anatagonized by FliW. This is Translational regulator CsrA from Thermosipho africanus (strain TCF52B).